A 588-amino-acid chain; its full sequence is Proline--tRNA ligase (588 aa).

It belongs to the class-II aminoacyl-tRNA synthetase family. ProS type 1 subfamily. Homodimer.

The protein resides in the cytoplasm. It carries out the reaction tRNA(Pro) + L-proline + ATP = L-prolyl-tRNA(Pro) + AMP + diphosphate. Catalyzes the attachment of proline to tRNA(Pro) in a two-step reaction: proline is first activated by ATP to form Pro-AMP and then transferred to the acceptor end of tRNA(Pro). As ProRS can inadvertently accommodate and process non-cognate amino acids such as alanine and cysteine, to avoid such errors it has two additional distinct editing activities against alanine. One activity is designated as 'pretransfer' editing and involves the tRNA(Pro)-independent hydrolysis of activated Ala-AMP. The other activity is designated 'posttransfer' editing and involves deacylation of mischarged Ala-tRNA(Pro). The misacylated Cys-tRNA(Pro) is not edited by ProRS. The polypeptide is Proline--tRNA ligase (Corynebacterium efficiens (strain DSM 44549 / YS-314 / AJ 12310 / JCM 11189 / NBRC 100395)).